A 105-amino-acid chain; its full sequence is Large ribosomal subunit protein uL24 (105 aa).

Belongs to the universal ribosomal protein uL24 family. In terms of assembly, part of the 50S ribosomal subunit.

In terms of biological role, one of two assembly initiator proteins, it binds directly to the 5'-end of the 23S rRNA, where it nucleates assembly of the 50S subunit. One of the proteins that surrounds the polypeptide exit tunnel on the outside of the subunit. The polypeptide is Large ribosomal subunit protein uL24 (Xanthomonas axonopodis pv. citri (strain 306)).